Consider the following 113-residue polypeptide: MTDTHSIAQPLEAEVSPANNRQLTVSYASRYPDYSRIPAITLKGQWLEAAGFATGTAVDVKVMEGCIVLTAQPAAAEESELMQSLRKVCKLSARKQRQVQEFIGVITGKQKVA.

One can recognise a SpoVT-AbrB domain in the interval 29-74 (SRYPDYSRIPAITLKGQWLEAAGFATGTAVDVKVMEGCIVLTAQPA).

The protein belongs to the SymE family.

It is found in the cytoplasm. Involved in the degradation and recycling of damaged RNA. It is itself a target for degradation by the ATP-dependent protease Lon. This chain is Endoribonuclease SymE, found in Shigella flexneri serotype 5b (strain 8401).